The primary structure comprises 188 residues: GMP synthase [glutamine-hydrolyzing] subunit A (188 aa).

One can recognise a Glutamine amidotransferase type-1 domain in the interval 2 to 188; sequence KIYIIDNGGQ…FKNFIEKCRR (187 aa). Catalysis depends on Cys79, which acts as the Nucleophile. Active-site residues include His166 and Glu168.

Heterodimer composed of a glutamine amidotransferase subunit (A) and a GMP-binding subunit (B).

The catalysed reaction is XMP + L-glutamine + ATP + H2O = GMP + L-glutamate + AMP + diphosphate + 2 H(+). It functions in the pathway purine metabolism; GMP biosynthesis; GMP from XMP (L-Gln route): step 1/1. Catalyzes the synthesis of GMP from XMP. This Picrophilus torridus (strain ATCC 700027 / DSM 9790 / JCM 10055 / NBRC 100828 / KAW 2/3) protein is GMP synthase [glutamine-hydrolyzing] subunit A.